A 234-amino-acid polypeptide reads, in one-letter code: Inosine triphosphate pyrophosphatase (234 aa).

11-16 (SGNKGK) serves as a coordination point for ITP. Glu-40 lines the Mg(2+) pocket. ITP is bound by residues Lys-53, 81–82 (DT), Lys-98, 176–179 (FGWD), Lys-203, and 208–209 (HR).

Belongs to the HAM1 NTPase family. In terms of assembly, homodimer. Mg(2+) is required as a cofactor. Mn(2+) serves as cofactor.

The protein resides in the cytoplasm. It catalyses the reaction ITP + H2O = IMP + diphosphate + H(+). It carries out the reaction dITP + H2O = dIMP + diphosphate + H(+). The enzyme catalyses XTP + H2O = XMP + diphosphate + H(+). In terms of biological role, pyrophosphatase that hydrolyzes non-canonical purine nucleotides such as inosine triphosphate (ITP), deoxyinosine triphosphate (dITP) or xanthosine 5'-triphosphate (XTP) to their respective monophosphate derivatives. The enzyme does not distinguish between the deoxy- and ribose forms. Probably excludes non-canonical purines from RNA and DNA precursor pools, thus preventing their incorporation into RNA and DNA and avoiding chromosomal lesions. This is Inosine triphosphate pyrophosphatase from Leishmania major.